A 130-amino-acid polypeptide reads, in one-letter code: Ribosome-binding factor A (130 aa).

The tract at residues 111-130 is disordered; that stretch reads RDLDDVGPGATSSDEDAEQR.

Belongs to the RbfA family. Monomer. Binds 30S ribosomal subunits, but not 50S ribosomal subunits or 70S ribosomes.

It localises to the cytoplasm. In terms of biological role, one of several proteins that assist in the late maturation steps of the functional core of the 30S ribosomal subunit. Associates with free 30S ribosomal subunits (but not with 30S subunits that are part of 70S ribosomes or polysomes). Required for efficient processing of 16S rRNA. May interact with the 5'-terminal helix region of 16S rRNA. This is Ribosome-binding factor A from Xanthomonas oryzae pv. oryzae (strain MAFF 311018).